We begin with the raw amino-acid sequence, 339 residues long: D-erythrose-4-phosphate dehydrogenase (339 aa).

12–13 (RI) is a binding site for NAD(+). Residues 154-156 (SCT), Arg-200, 213-214 (TK), and Arg-236 contribute to the substrate site. The active-site Nucleophile is Cys-155. Asn-318 provides a ligand contact to NAD(+).

Belongs to the glyceraldehyde-3-phosphate dehydrogenase family. Epd subfamily. As to quaternary structure, homotetramer.

The protein resides in the cytoplasm. It carries out the reaction D-erythrose 4-phosphate + NAD(+) + H2O = 4-phospho-D-erythronate + NADH + 2 H(+). It participates in cofactor biosynthesis; pyridoxine 5'-phosphate biosynthesis; pyridoxine 5'-phosphate from D-erythrose 4-phosphate: step 1/5. Its function is as follows. Catalyzes the NAD-dependent conversion of D-erythrose 4-phosphate to 4-phosphoerythronate. The sequence is that of D-erythrose-4-phosphate dehydrogenase from Photorhabdus laumondii subsp. laumondii (strain DSM 15139 / CIP 105565 / TT01) (Photorhabdus luminescens subsp. laumondii).